Here is a 218-residue protein sequence, read N- to C-terminus: Imidazole glycerol phosphate synthase subunit HisH (218 aa).

Residues 12–218 (SIVVVDYGLG…RNFVDYCADQ (207 aa)) enclose the Glutamine amidotransferase type-1 domain. Cys88 serves as the catalytic Nucleophile. Residues His196 and Glu198 contribute to the active site.

As to quaternary structure, heterodimer of HisH and HisF.

Its subcellular location is the cytoplasm. It catalyses the reaction 5-[(5-phospho-1-deoxy-D-ribulos-1-ylimino)methylamino]-1-(5-phospho-beta-D-ribosyl)imidazole-4-carboxamide + L-glutamine = D-erythro-1-(imidazol-4-yl)glycerol 3-phosphate + 5-amino-1-(5-phospho-beta-D-ribosyl)imidazole-4-carboxamide + L-glutamate + H(+). The catalysed reaction is L-glutamine + H2O = L-glutamate + NH4(+). The protein operates within amino-acid biosynthesis; L-histidine biosynthesis; L-histidine from 5-phospho-alpha-D-ribose 1-diphosphate: step 5/9. IGPS catalyzes the conversion of PRFAR and glutamine to IGP, AICAR and glutamate. The HisH subunit catalyzes the hydrolysis of glutamine to glutamate and ammonia as part of the synthesis of IGP and AICAR. The resulting ammonia molecule is channeled to the active site of HisF. This chain is Imidazole glycerol phosphate synthase subunit HisH, found in Halobacterium salinarum (strain ATCC 700922 / JCM 11081 / NRC-1) (Halobacterium halobium).